Consider the following 334-residue polypeptide: Ornithine carbamoyltransferase, catabolic (334 aa).

Carbamoyl phosphate contacts are provided by residues 57 to 60, Gln84, Arg108, and 135 to 138; these read STRT and HPTQ. L-ornithine-binding positions include Asn168, Asp232, and 236–237; that span reads SM. Carbamoyl phosphate contacts are provided by residues 274–275 and Arg321; that span reads CL.

It belongs to the aspartate/ornithine carbamoyltransferase superfamily. OTCase family.

The protein resides in the cytoplasm. It catalyses the reaction carbamoyl phosphate + L-ornithine = L-citrulline + phosphate + H(+). The protein operates within amino-acid degradation; L-arginine degradation via ADI pathway; carbamoyl phosphate from L-arginine: step 2/2. In terms of biological role, reversibly catalyzes the transfer of the carbamoyl group from carbamoyl phosphate (CP) to the N(epsilon) atom of ornithine (ORN) to produce L-citrulline. The chain is Ornithine carbamoyltransferase, catabolic (arcB) from Haemophilus influenzae (strain ATCC 51907 / DSM 11121 / KW20 / Rd).